The primary structure comprises 590 residues: Pentatricopeptide repeat-containing protein At2g46050, mitochondrial (590 aa).

A mitochondrion-targeting transit peptide spans 1–109 (MRFTFLRSTR…RNIVTWNILI (109 aa)). PPR repeat units follow at residues 141-175 (DHVSFMGLIRLCTDSTNMKAGIQLHCLMVKQGLES), 176-206 (SCFPSTSLVHFYGKCGLIVEARRVFEAVLDR), 207-241 (DLVLWNALVSSYVLNGMIDEAFGLLKLMGSDKNRF), 244-266 (DYFTFSSLLSACRIEQGKQIHAI), 275-305 (DIPVATALLNMYAKSNHLSDARECFESMVVR), 306-340 (NVVSWNAMIVGFAQNGEGREAMRLFGQMLLENLQP), 341-375 (DELTFASVLSSCAKFSAIWEIKQVQAMVTKKGSAD), 376-406 (FLSVANSLISSYSRNGNLSEALLCFHSIREP), 407-437 (DLVSWTSVIGALASHGFAEESLQMFESMLQK), 441-471 (DKITFLEVLSACSHGGLVQEGLRCFKRMTEF), and 477-507 (EDEHYTCLIDLLGRAGFIDEASDVLNSMPTE). The tract at residues 512 to 588 (ALAAFTGGCN…TPGCSWLGDY (77 aa)) is type E motif.

It belongs to the PPR family. PCMP-E subfamily.

It localises to the mitochondrion. This is Pentatricopeptide repeat-containing protein At2g46050, mitochondrial (PCMP-E39) from Arabidopsis thaliana (Mouse-ear cress).